We begin with the raw amino-acid sequence, 104 residues long: Zinc finger C2H2 protein ECU02_0310 (104 aa).

Residues 56 to 80 (FYCCECDRHFITEKVLMEHKRSNPH) form a C2H2-type zinc finger.

Belongs to the ZNF593/BUD20 C2H2-type zinc-finger protein family. Associates with pre-60S ribosomal particles; released from the pre-60S particle very early in the cytoplasm.

Its subcellular location is the nucleus. The protein localises to the cytoplasm. Its function is as follows. Involved in pre-60S ribosomal particles maturation by promoting the nuclear export of the 60S ribosome. The polypeptide is Zinc finger C2H2 protein ECU02_0310 (Encephalitozoon cuniculi (strain GB-M1) (Microsporidian parasite)).